The chain runs to 538 residues: MKRPKLKKASKRMTCHKRYKIQKKVREHHRKLRKEAKKRGHKKPKKDPGVPNSAPFKEALLREAELRKQQLEELKQQQKLDRQKEQERKRKLEISPDDEQSNVETQEESDEPKIKKAKSGKQNPKKLHCQELKKVIEASDIVLEVLDARDPLGCRCPQVEEAVIQSGCKKLVLVLNKSDLVPKENLENWLTYLNKELPTVVFKASTNLKNRKKTFKIKKKVVPFQSKLCCGKEALWKLLGGFQQSCGKGVQVGVVGFPNVGKSSIINSLKQERICSVGVSMGLTRSMQIVPLDKQITIIDSPCFIISPCNSPAALALRSPASIEVLRPLEAASAILSQADSQQVVLKYTVPGYKDSLDFFTKLAQRRGLHQKGGSPNVESAAKLLWSEWTGASLGYYCHPPASWNHSPHFNENITAIMKRGFNLEELEKNNAHSIQVLKGPHLTNKILFRSSGLTNGILEEKDIPEESPKQTEDQQDGDDQEHVTGEKNAEISDVTPVEETREMSPGQSTASKPSDRSFILDKMSEEDDAYDFTTDYI.

The segment covering 1–45 has biased composition (basic residues); sequence MKRPKLKKASKRMTCHKRYKIQKKVREHHRKLRKEAKKRGHKKPK. Positions 1-125 are disordered; the sequence is MKRPKLKKAS…KAKSGKQNPK (125 aa). Residues 2 to 46 are basic; sequence KRPKLKKASKRMTCHKRYKIQKKVREHHRKLRKEAKKRGHKKPKK. Positions 54-95 form a coiled coil; sequence APFKEALLREAELRKQQLEELKQQQKLDRQKEQERKRKLEIS. Residues 59 to 94 show a composition bias toward basic and acidic residues; sequence ALLREAELRKQQLEELKQQQKLDRQKEQERKRKLEI. K79 carries the N6-acetyllysine modification. K91 is covalently cross-linked (Glycyl lysine isopeptide (Lys-Gly) (interchain with G-Cter in SUMO2)). Residues S95 and S101 each carry the phosphoserine modification. Residues 95–110 show a composition bias toward acidic residues; it reads SPDDEQSNVETQEESD. Residues 115 to 125 show a composition bias toward basic residues; it reads KKAKSGKQNPK. One can recognise a CP-type G domain in the interval 129-307; sequence CQELKKVIEA…IIDSPCFIIS (179 aa). Residue 176-179 participates in GTP binding; sequence NKSD. Residues K177, K248, K262, and K270 each participate in a glycyl lysine isopeptide (Lys-Gly) (interchain with G-Cter in SUMO2) cross-link. Residue 256-263 participates in GTP binding; that stretch reads GFPNVGKS. The tract at residues 277 to 451 is intermediate; sequence VGVSMGLTRS…HLTNKILFRS (175 aa). 300 to 303 is a GTP binding site; sequence DSPC. Basic and acidic residues-rich tracts occupy residues 460 to 473 and 481 to 491; these read EEKDIPEESPKQTE and QEHVTGEKNAE. The acidic stretch occupies residues 460–532; that stretch reads EEKDIPEESP…KMSEEDDAYD (73 aa). The interval 460-538 is disordered; it reads EEKDIPEESP…DAYDFTTDYI (79 aa). S493, S505, and S518 each carry phosphoserine. Over residues 514–524 the composition is skewed to basic and acidic residues; sequence PSDRSFILDKM.

It belongs to the TRAFAC class YlqF/YawG GTPase family. In terms of assembly, interacts with MDM2; this interaction stabilizes MDM2. Interaction with MDM2 occurs in the nucleoplasm and is triggered by a nucleolar release mechanism, such as mitosis-induced nucleolar disassembly. May interact with p53/TP53 via its basic domain. This interaction is most probably indirect and mediated by MDM2-binding. As to expression, expressed in testis.

It localises to the nucleus. It is found in the nucleolus. Functionally, may be required to maintain the proliferative capacity of stem cells. Stabilizes MDM2 by preventing its ubiquitination, and hence proteasomal degradation. The sequence is that of Guanine nucleotide-binding protein-like 3 (Gnl3) from Rattus norvegicus (Rat).